Here is a 458-residue protein sequence, read N- to C-terminus: Cysteine--tRNA ligase (458 aa).

Residue Cys29 participates in Zn(2+) binding. The 'HIGH' region motif lies at 31 to 41 (PTVYDNPHIGN). Positions 214, 239, and 243 each coordinate Zn(2+). Positions 272 to 276 (KMSKS) match the 'KMSKS' region motif. An ATP-binding site is contributed by Lys275.

This sequence belongs to the class-I aminoacyl-tRNA synthetase family. In terms of assembly, monomer. The cofactor is Zn(2+).

Its subcellular location is the cytoplasm. It catalyses the reaction tRNA(Cys) + L-cysteine + ATP = L-cysteinyl-tRNA(Cys) + AMP + diphosphate. This Rickettsia bellii (strain OSU 85-389) protein is Cysteine--tRNA ligase.